Reading from the N-terminus, the 142-residue chain is Organic hydroperoxide resistance protein-like 2 (142 aa).

This sequence belongs to the OsmC/Ohr family.

This Staphylococcus saprophyticus subsp. saprophyticus (strain ATCC 15305 / DSM 20229 / NCIMB 8711 / NCTC 7292 / S-41) protein is Organic hydroperoxide resistance protein-like 2.